We begin with the raw amino-acid sequence, 367 residues long: GDSL esterase/lipase 3 (367 aa).

The first 23 residues, 1–23 (MVRLVLIIFFVYTIILSIGSINC), serve as a signal peptide directing secretion. S42 serves as the catalytic Nucleophile. 3 N-linked (GlcNAc...) asparagine glycosylation sites follow: N175, N194, and N321. Catalysis depends on residues D329 and H332. N351 carries an N-linked (GlcNAc...) asparagine glycan.

The protein belongs to the 'GDSL' lipolytic enzyme family.

It localises to the secreted. This Arabidopsis thaliana (Mouse-ear cress) protein is GDSL esterase/lipase 3 (GLIP3).